Here is a 144-residue protein sequence, read N- to C-terminus: Large ribosomal subunit protein uL16 (144 aa).

This sequence belongs to the universal ribosomal protein uL16 family. Part of the 50S ribosomal subunit.

Its function is as follows. Binds 23S rRNA and is also seen to make contacts with the A and possibly P site tRNAs. The chain is Large ribosomal subunit protein uL16 from Levilactobacillus brevis (strain ATCC 367 / BCRC 12310 / CIP 105137 / JCM 1170 / LMG 11437 / NCIMB 947 / NCTC 947) (Lactobacillus brevis).